The primary structure comprises 366 residues: Mannonate dehydratase (366 aa).

It belongs to the mannonate dehydratase family. Fe(2+) is required as a cofactor. Mn(2+) serves as cofactor.

The enzyme catalyses D-mannonate = 2-dehydro-3-deoxy-D-gluconate + H2O. It functions in the pathway carbohydrate metabolism; pentose and glucuronate interconversion. Catalyzes the dehydration of D-mannonate. This chain is Mannonate dehydratase, found in Streptococcus pneumoniae (strain 70585).